Here is a 505-residue protein sequence, read N- to C-terminus: 2,3-bisphosphoglycerate-independent phosphoglycerate mutase (505 aa).

Residues Asp12 and Ser62 each contribute to the Mn(2+) site. Catalysis depends on Ser62, which acts as the Phosphoserine intermediate. Residues His123, 153-154 (RD), Arg185, Arg191, 257-260 (RPDR), and Lys330 each bind substrate. Mn(2+) contacts are provided by Asp397, His401, Asp438, His439, and His456.

Belongs to the BPG-independent phosphoglycerate mutase family. In terms of assembly, monomer. Mn(2+) serves as cofactor.

The enzyme catalyses (2R)-2-phosphoglycerate = (2R)-3-phosphoglycerate. It participates in carbohydrate degradation; glycolysis; pyruvate from D-glyceraldehyde 3-phosphate: step 3/5. Catalyzes the interconversion of 2-phosphoglycerate and 3-phosphoglycerate. In Staphylococcus haemolyticus (strain JCSC1435), this protein is 2,3-bisphosphoglycerate-independent phosphoglycerate mutase.